A 148-amino-acid chain; its full sequence is 3-dehydroquinate dehydratase (148 aa).

The Proton acceptor role is filled by Tyr23. Positions 75, 81, and 88 each coordinate substrate. The Proton donor role is filled by His101. Substrate-binding positions include 102 to 103 and Arg112; that span reads LS.

It belongs to the type-II 3-dehydroquinase family. Homododecamer.

It carries out the reaction 3-dehydroquinate = 3-dehydroshikimate + H2O. The protein operates within metabolic intermediate biosynthesis; chorismate biosynthesis; chorismate from D-erythrose 4-phosphate and phosphoenolpyruvate: step 3/7. Functionally, catalyzes a trans-dehydration via an enolate intermediate. In Xanthomonas axonopodis pv. citri (strain 306), this protein is 3-dehydroquinate dehydratase.